A 255-amino-acid polypeptide reads, in one-letter code: EEF1A lysine methyltransferase 4 (255 aa).

S-adenosyl-L-methionine-binding residues include Trp26 and Tyr30. Phosphotyrosine is present on Tyr39. Residues Trp41, Gly66, 88 to 89, 113 to 114, and Lys130 each bind S-adenosyl-L-methionine; these read DY and DV. The Required for methyltransferase activity motif lies at 129-134; it reads EKGTLD.

Belongs to the methyltransferase superfamily.

It carries out the reaction L-lysyl-[protein] + S-adenosyl-L-methionine = N(6)-methyl-L-lysyl-[protein] + S-adenosyl-L-homocysteine + H(+). The enzyme catalyses N(6)-methyl-L-lysyl-[protein] + S-adenosyl-L-methionine = N(6),N(6)-dimethyl-L-lysyl-[protein] + S-adenosyl-L-homocysteine + H(+). The catalysed reaction is N(6),N(6)-dimethyl-L-lysyl-[protein] + S-adenosyl-L-methionine = N(6),N(6),N(6)-trimethyl-L-lysyl-[protein] + S-adenosyl-L-homocysteine + H(+). Protein-lysine methyltransferase that efficiently catalyzes three successive methylations on 'Lys-36' in eukaryotic translation elongation factor 1 alpha (EEF1A1 or EEF1A2). This is EEF1A lysine methyltransferase 4 from Bos taurus (Bovine).